Consider the following 346-residue polypeptide: uncharacterized protein (346 aa).

Residues 1–28 (MFEWMKNKKAISPILALLIVLGVTIVVG) form the signal peptide.

This is an uncharacterized protein from Methanocaldococcus jannaschii (strain ATCC 43067 / DSM 2661 / JAL-1 / JCM 10045 / NBRC 100440) (Methanococcus jannaschii).